The sequence spans 648 residues: MEIFHQAIWLIPVLPLSASMLSGIGLLTFRETTSDLRRLHGALAIGAMALSFVVSLGVLWNQLHGIAPVRWIIEWMLTDTFRLEIGYWVDPLTSTMLVVVTSVALLVMIYSDEYMHVDEGYVRFFVYLSIFTTSMLGLVLSPNLVQVYGFWELVGMCSYLLVGFWFTRPTAAEASQKAFITNRVGDFGLLLGILALYWMTGSFEFASIADRLGDLLIAIPSLRTIACIACILVFMGPIAKSAQFPLHVWLPDAMEGPTPISALIHAATMVAAGVFLVARMFPVFDQLPLVMELIAWTGTLTAFLGATMALTQSDIKKGLAYSTMSQLGYMIMALGTGAYSEALFHLTTHAYSKALLFLAAGSVIHGMEPVVGFSPMQNQNMHRMGGLRKYMPLTAMTFLLGTCSICGIPPLACFWSKDAILAEVFATHPTCWLIAWLTAGMTGFYMFRIYFLTFEGSFRSDLGRAKPKESHLGMVAPLIILAIPTVAIGSLGTPFAPVWETFVHAPGQLSSLDEEFDLAEFLEMAGSSVGIGLLGISLSSLMYRNYAIDATRISEYFSPLNRLFASKWYIDDLYAQVIVQGTRTIAQTLLIFDQRIIDGAVNLTAFGTLSAADTLKYWENGRVQFYILSIIFGVLFGSWLLTTHLSSL.

16 consecutive transmembrane segments (helical) span residues 7 to 27 (AIWLIPVLPLSASMLSGIGLL), 39 to 59 (LHGALAIGAMALSFVVSLGVL), 89 to 109 (VDPLTSTMLVVVTSVALLVMI), 124 to 144 (FFVYLSIFTTSMLGLVLSPNL), 147 to 167 (VYGFWELVGMCSYLLVGFWFT), 189 to 209 (LLLGILALYWMTGSFEFASIA), 215 to 235 (LLIAIPSLRTIACIACILVFM), 258 to 278 (TPISALIHAATMVAAGVFLVA), 289 to 309 (LVMELIAWTGTLTAFLGATMA), 327 to 347 (LGYMIMALGTGAYSEALFHLT), 354 to 374 (ALLFLAAGSVIHGMEPVVGFS), 395 to 415 (AMTFLLGTCSICGIPPLACFW), 432 to 452 (WLIAWLTAGMTGFYMFRIYFL), 472 to 492 (LGMVAPLIILAIPTVAIGSLG), 518 to 538 (LAEFLEMAGSSVGIGLLGISL), and 625 to 645 (FYILSIIFGVLFGSWLLTTHL).

It belongs to the complex I subunit 5 family. As to quaternary structure, NDH is composed of at least 16 different subunits, 5 of which are encoded in the nucleus.

It localises to the plastid. It is found in the chloroplast thylakoid membrane. The catalysed reaction is a plastoquinone + NADH + (n+1) H(+)(in) = a plastoquinol + NAD(+) + n H(+)(out). The enzyme catalyses a plastoquinone + NADPH + (n+1) H(+)(in) = a plastoquinol + NADP(+) + n H(+)(out). Its function is as follows. NDH shuttles electrons from NAD(P)H:plastoquinone, via FMN and iron-sulfur (Fe-S) centers, to quinones in the photosynthetic chain and possibly in a chloroplast respiratory chain. The immediate electron acceptor for the enzyme in this species is believed to be plastoquinone. Couples the redox reaction to proton translocation, and thus conserves the redox energy in a proton gradient. The protein is NAD(P)H-quinone oxidoreductase subunit 5, chloroplastic (ndhF) of Nephroselmis olivacea (Green alga).